Here is a 365-residue protein sequence, read N- to C-terminus: Chorismate synthase (365 aa).

NADP(+) contacts are provided by arginine 48 and arginine 54. FMN is bound by residues 125–127 (RAS), 237–238 (NA), glycine 277, 292–296 (KPTSS), and arginine 318.

Belongs to the chorismate synthase family. As to quaternary structure, homotetramer. FMNH2 serves as cofactor.

It carries out the reaction 5-O-(1-carboxyvinyl)-3-phosphoshikimate = chorismate + phosphate. It functions in the pathway metabolic intermediate biosynthesis; chorismate biosynthesis; chorismate from D-erythrose 4-phosphate and phosphoenolpyruvate: step 7/7. Functionally, catalyzes the anti-1,4-elimination of the C-3 phosphate and the C-6 proR hydrogen from 5-enolpyruvylshikimate-3-phosphate (EPSP) to yield chorismate, which is the branch point compound that serves as the starting substrate for the three terminal pathways of aromatic amino acid biosynthesis. This reaction introduces a second double bond into the aromatic ring system. The protein is Chorismate synthase of Polaromonas sp. (strain JS666 / ATCC BAA-500).